We begin with the raw amino-acid sequence, 225 residues long: Phosphoribosylformylglycinamidine synthase subunit PurQ (225 aa).

Residues 4 to 225 (RIGVITFPGT…LSVLDTLVTA (222 aa)) enclose the Glutamine amidotransferase type-1 domain. Residue Cys87 is the Nucleophile of the active site. Residues His196 and Glu198 contribute to the active site.

Part of the FGAM synthase complex composed of 1 PurL, 1 PurQ and 2 PurS subunits.

Its subcellular location is the cytoplasm. The catalysed reaction is N(2)-formyl-N(1)-(5-phospho-beta-D-ribosyl)glycinamide + L-glutamine + ATP + H2O = 2-formamido-N(1)-(5-O-phospho-beta-D-ribosyl)acetamidine + L-glutamate + ADP + phosphate + H(+). It catalyses the reaction L-glutamine + H2O = L-glutamate + NH4(+). It functions in the pathway purine metabolism; IMP biosynthesis via de novo pathway; 5-amino-1-(5-phospho-D-ribosyl)imidazole from N(2)-formyl-N(1)-(5-phospho-D-ribosyl)glycinamide: step 1/2. Its function is as follows. Part of the phosphoribosylformylglycinamidine synthase complex involved in the purines biosynthetic pathway. Catalyzes the ATP-dependent conversion of formylglycinamide ribonucleotide (FGAR) and glutamine to yield formylglycinamidine ribonucleotide (FGAM) and glutamate. The FGAM synthase complex is composed of three subunits. PurQ produces an ammonia molecule by converting glutamine to glutamate. PurL transfers the ammonia molecule to FGAR to form FGAM in an ATP-dependent manner. PurS interacts with PurQ and PurL and is thought to assist in the transfer of the ammonia molecule from PurQ to PurL. In Nocardia farcinica (strain IFM 10152), this protein is Phosphoribosylformylglycinamidine synthase subunit PurQ.